The chain runs to 366 residues: DENN domain-containing protein 10 (366 aa).

The region spanning 1–147 (MATSISLEDS…RVFNRGQFDV (147 aa)) is the uDENN domain. Residues 169–309 (IKDIIQLFGE…EEITDQNVIK (141 aa)) form the cDENN domain. One can recognise a dDENN domain in the interval 311 to 366 (LNLKMKELLTKLESLKETNEETGKSSITLESLETRKLPNGMSTFLFNIANAEGLNG).

It belongs to the DENND10 family.

Its subcellular location is the late endosome. Its function is as follows. Guanine nucleotide exchange factor (GEF) which may be involved in the regulation of homeostasis of late endocytic pathway, including endosomal positioning, maturation and secretion. This chain is DENN domain-containing protein 10 (dennd10), found in Dictyostelium discoideum (Social amoeba).